A 1123-amino-acid chain; its full sequence is Leucine-rich repeat receptor-like protein kinase PEPR1 (1123 aa).

An N-terminal signal peptide occupies residues Met1–Cys28. Residues Leu29–Gln769 lie on the Extracellular side of the membrane. The LRR 1 repeat unit spans residues Ser31 to Thr53. N-linked (GlcNAc...) asparagine glycosylation is found at Asn57, Asn81, Asn110, and Asn121. 7 LRR repeats span residues Ser74–Leu98, Lys99–Cys122, Lys124–Ser145, Leu146–Ile170, Pro171–Ala194, Glu196–Ser218, and Ser219–Gly243. Residues Asn182 and Asn217 are each glycosylated (N-linked (GlcNAc...) asparagine). N-linked (GlcNAc...) asparagine glycans are attached at residues Asn244, Asn252, Asn289, Asn302, Asn316, Asn321, and Asn337. 20 LRR repeats span residues Leu245–Cys266, Lys267–Cys290, Ser292–Leu314, Lys315–Cys338, Ser340–Leu362, Arg363–Ser386, Ser388–Met410, Lys412–Asn434, Ser435–Gly458, Arg459–Cys482, Thr484–Asp505, His506–Cys529, Lys530–Leu553, Gln554–Cys577, Ser579–Asn600, Trp601–Leu625, Lys626–Glu650, Leu652–Leu674, Ile675–Gly696, and Leu697–Gln721. 3 N-linked (GlcNAc...) asparagine glycosylation sites follow: Asn398, Asn420, and Asn434. Asn494 carries an N-linked (GlcNAc...) asparagine glycan. Residues Asn531, Asn536, Asn560, Asn591, and Asn597 are each glycosylated (N-linked (GlcNAc...) asparagine). N-linked (GlcNAc...) asparagine glycans are attached at residues Asn681 and Asn686. Residue Asn745 is glycosylated (N-linked (GlcNAc...) asparagine). A helical membrane pass occupies residues Ile770–Phe790. The Cytoplasmic portion of the chain corresponds to Ile791–Arg1123. At Thr824 the chain carries Phosphothreonine. The Protein kinase domain maps to Leu827 to Arg1115. ATP contacts are provided by residues Ile833–Val841 and Lys855. Residues Tyr901 and Tyr941 each carry the phosphotyrosine modification. Catalysis depends on Asp954, which acts as the Proton acceptor. Tyr995 bears the Phosphotyrosine mark.

The protein belongs to the protein kinase superfamily. Ser/Thr protein kinase family. In terms of assembly, interacts with PEP1 and BAK1. Interacts with BIK1 and PBL1. Post-translationally, N-glycosylated.

Its subcellular location is the cell membrane. The enzyme catalyses L-seryl-[protein] + ATP = O-phospho-L-seryl-[protein] + ADP + H(+). It carries out the reaction L-threonyl-[protein] + ATP = O-phospho-L-threonyl-[protein] + ADP + H(+). Its function is as follows. Acts as a receptor for PEP defense peptides. Unlike typical immune receptors, senses an endogenous elicitor that potentiates pathogen-associated molecular pattern (PAMP)-inducible plant responses. Involved in PAMP-triggered immunity (PTI) signaling. Interacts with and phosphorylates the kinase BIK1, a central rate-limiting kinase in PTI signaling. This is Leucine-rich repeat receptor-like protein kinase PEPR1 (PEPR1) from Arabidopsis thaliana (Mouse-ear cress).